Reading from the N-terminus, the 55-residue chain is Large ribosomal subunit protein bL33 (55 aa).

It belongs to the bacterial ribosomal protein bL33 family.

The protein is Large ribosomal subunit protein bL33 of Sinorhizobium fredii (strain NBRC 101917 / NGR234).